The sequence spans 363 residues: Peroxidase (363 aa).

Residues 1–20 (MKLSLLSTFAAVIIGALALP) form the signal peptide. At Gln21 the chain carries Pyrrolidone carboxylic acid. Cystine bridges form between Cys31-Cys43, Cys42-Cys312, Cys62-Cys148, and Cys276-Cys341. The active-site Proton acceptor is His75. Asp76, Gly94, Asp96, and Ser98 together coordinate Ca(2+). N-linked (GlcNAc...) (high mannose) asparagine glycosylation occurs at Asn162. His203 lines the heme b pocket. 5 residues coordinate Ca(2+): Ser204, Asp221, Thr223, Val226, and Asp228. The O-linked (Man...) serine glycan is linked to Ser358.

It belongs to the peroxidase family. Ligninase subfamily. It depends on Ca(2+) as a cofactor. Heme b is required as a cofactor.

It localises to the secreted. The enzyme catalyses 2 a phenolic donor + H2O2 = 2 a phenolic radical donor + 2 H2O. This is Peroxidase (CIP1) from Coprinopsis cinerea (strain Okayama-7 / 130 / ATCC MYA-4618 / FGSC 9003) (Inky cap fungus).